We begin with the raw amino-acid sequence, 100 residues long: Large ribosomal subunit protein uL23 (100 aa).

It belongs to the universal ribosomal protein uL23 family. In terms of assembly, part of the 50S ribosomal subunit. Contacts protein L29, and trigger factor when it is bound to the ribosome.

In terms of biological role, one of the early assembly proteins it binds 23S rRNA. One of the proteins that surrounds the polypeptide exit tunnel on the outside of the ribosome. Forms the main docking site for trigger factor binding to the ribosome. In Colwellia psychrerythraea (strain 34H / ATCC BAA-681) (Vibrio psychroerythus), this protein is Large ribosomal subunit protein uL23.